The following is a 220-amino-acid chain: Protein GrpE (220 aa).

Polar residues-rich tracts occupy residues 1–12 (MEQGDKQATYNE) and 50–63 (AAST…QTSV). Residues 1–67 (MEQGDKQATY…AEQTSVEAEE (67 aa)) are disordered.

It belongs to the GrpE family. As to quaternary structure, homodimer.

The protein resides in the cytoplasm. In terms of biological role, participates actively in the response to hyperosmotic and heat shock by preventing the aggregation of stress-denatured proteins, in association with DnaK and GrpE. It is the nucleotide exchange factor for DnaK and may function as a thermosensor. Unfolded proteins bind initially to DnaJ; upon interaction with the DnaJ-bound protein, DnaK hydrolyzes its bound ATP, resulting in the formation of a stable complex. GrpE releases ADP from DnaK; ATP binding to DnaK triggers the release of the substrate protein, thus completing the reaction cycle. Several rounds of ATP-dependent interactions between DnaJ, DnaK and GrpE are required for fully efficient folding. The protein is Protein GrpE of Geobacillus thermodenitrificans (strain NG80-2).